A 244-amino-acid polypeptide reads, in one-letter code: LexA repressor (244 aa).

A disordered region spans residues 1–24 (MSDSSDTTVDGASDGASDGASGAD). Residues 10–24 (DGASDGASDGASGAD) are compositionally biased toward low complexity. Residues 58 to 78 (IREIGDAVGLTSTSSVAHQLR) constitute a DNA-binding region (H-T-H motif). Residues Ser-168 and Lys-205 each act as for autocatalytic cleavage activity in the active site.

Belongs to the peptidase S24 family. In terms of assembly, homodimer.

It carries out the reaction Hydrolysis of Ala-|-Gly bond in repressor LexA.. Represses a number of genes involved in the response to DNA damage (SOS response), including recA and lexA. In the presence of single-stranded DNA, RecA interacts with LexA causing an autocatalytic cleavage which disrupts the DNA-binding part of LexA, leading to derepression of the SOS regulon and eventually DNA repair. This chain is LexA repressor, found in Mycobacterium marinum (strain ATCC BAA-535 / M).